A 204-amino-acid chain; its full sequence is dITP/XTP pyrophosphatase (204 aa).

Residue 7-12 (TNNKDK) coordinates substrate. Asp38 and Asp74 together coordinate Mg(2+). The Proton acceptor role is filled by Asp74. Residues Ser75, 156-159 (FGYD), Lys179, and 184-185 (HR) contribute to the substrate site.

Belongs to the HAM1 NTPase family. In terms of assembly, homodimer. The cofactor is Mg(2+).

It carries out the reaction XTP + H2O = XMP + diphosphate + H(+). The catalysed reaction is dITP + H2O = dIMP + diphosphate + H(+). The enzyme catalyses ITP + H2O = IMP + diphosphate + H(+). Pyrophosphatase that catalyzes the hydrolysis of nucleoside triphosphates to their monophosphate derivatives, with a high preference for the non-canonical purine nucleotides XTP (xanthosine triphosphate), dITP (deoxyinosine triphosphate) and ITP. Seems to function as a house-cleaning enzyme that removes non-canonical purine nucleotides from the nucleotide pool, thus preventing their incorporation into DNA/RNA and avoiding chromosomal lesions. This is dITP/XTP pyrophosphatase from Campylobacter fetus subsp. fetus (strain 82-40).